The sequence spans 655 residues: Probable potassium transport system protein Kup (655 aa).

The next 12 membrane-spanning stretches (helical) occupy residues 19-39 (GLLI…LYVM), 42-62 (IAGG…CVFW), 102-122 (VWPA…TPPI), 132-152 (LIFN…VMLF), 161-181 (IVGK…ATLG), 214-234 (SGFW…ALYS), 246-266 (ISWI…GAWI), 282-302 (IMPE…AIIA), 338-358 (LFIP…VLWF), 370-390 (LAIN…LLII), 395-415 (FIWV…FLVA), and 420-440 (FFHG…IMII).

It belongs to the HAK/KUP transporter (TC 2.A.72) family.

The protein localises to the cell inner membrane. The enzyme catalyses K(+)(in) + H(+)(in) = K(+)(out) + H(+)(out). Its function is as follows. Transport of potassium into the cell. Likely operates as a K(+):H(+) symporter. In Cytophaga hutchinsonii (strain ATCC 33406 / DSM 1761 / CIP 103989 / NBRC 15051 / NCIMB 9469 / D465), this protein is Probable potassium transport system protein Kup.